We begin with the raw amino-acid sequence, 187 residues long: Cerebral dopamine neurotrophic factor (187 aa).

An N-terminal signal peptide occupies residues 1 to 24 (MRCISPTALVTFCAGFCISNPVLA). 3 disulfide bridges follow: cysteine 37/cysteine 124, cysteine 40/cysteine 113, and cysteine 71/cysteine 82.

This sequence belongs to the ARMET family. As to expression, expressed at high levels in the heart, skeletal muscle, testis and brain (at protein level). In the brain, detected in the cerebral cortex neurons through layers II to VI. In the hippocampus, detected in the CA1 to CA3 pyramidal regions and in the granule and polymorph layers of dentate gyrus. Weak expression in the striatum. In substantia nigra, detected in solitary cells that did not express tyrosine hydroxylase, a marker for dopaminergic neurons. Relatively high expression in the Purkinje cells of the cerebellum and in regions of the brain stem, including the locus coeruleus.

The protein localises to the secreted. In terms of biological role, trophic factor for dopamine neurons. Prevents the 6-hydroxydopamine (6-OHDA)-induced degeneration of dopaminergic neurons. When administered after 6-OHDA-lesioning, restores the dopaminergic function and prevents the degeneration of dopaminergic neurons in substantia nigra. In Mus musculus (Mouse), this protein is Cerebral dopamine neurotrophic factor (Cdnf).